We begin with the raw amino-acid sequence, 37 residues long: Large ribosomal subunit protein bL36c (37 aa).

Belongs to the bacterial ribosomal protein bL36 family.

It is found in the plastid. Its subcellular location is the chloroplast. In Pinus koraiensis (Korean pine), this protein is Large ribosomal subunit protein bL36c.